A 224-amino-acid chain; its full sequence is Ribonuclease HII (224 aa).

The region spanning 1–210 (MKLGGIDEAG…LKKIEEKLQK (210 aa)) is the RNase H type-2 domain. 3 residues coordinate a divalent metal cation: Asp7, Glu8, and Asp105.

It belongs to the RNase HII family. It depends on Mn(2+) as a cofactor. The cofactor is Mg(2+).

The protein resides in the cytoplasm. It carries out the reaction Endonucleolytic cleavage to 5'-phosphomonoester.. Functionally, endonuclease that specifically degrades the RNA of RNA-DNA hybrids. The sequence is that of Ribonuclease HII from Thermococcus sibiricus (strain DSM 12597 / MM 739).